The following is a 190-amino-acid chain: Adenine phosphoribosyltransferase (190 aa).

The protein belongs to the purine/pyrimidine phosphoribosyltransferase family. In terms of assembly, homodimer.

It is found in the cytoplasm. It carries out the reaction AMP + diphosphate = 5-phospho-alpha-D-ribose 1-diphosphate + adenine. The protein operates within purine metabolism; AMP biosynthesis via salvage pathway; AMP from adenine: step 1/1. Its function is as follows. Catalyzes a salvage reaction resulting in the formation of AMP, that is energically less costly than de novo synthesis. The chain is Adenine phosphoribosyltransferase from Cupriavidus metallidurans (strain ATCC 43123 / DSM 2839 / NBRC 102507 / CH34) (Ralstonia metallidurans).